Reading from the N-terminus, the 21-residue chain is Fibrinogen beta chain (21 aa).

Residue Q1 is modified to Pyrrolidone carboxylic acid. The span at 1–11 (QHSTDYDEVED) shows a compositional bias: acidic residues. Residues 1-21 (QHSTDYDEVEDDRAKLHLDAR) form a disordered region. The O-linked (GalNAc...) threonine glycan is linked to T4. At Y6 the chain carries Sulfotyrosine. Over residues 12–21 (DRAKLHLDAR) the composition is skewed to basic and acidic residues.

As to quaternary structure, heterohexamer; disulfide linked. Contains 2 sets of 3 non-identical chains (alpha, beta and gamma). The 2 heterotrimers are in head to head conformation with the N-termini in a small central domain. In terms of processing, conversion of fibrinogen to fibrin is triggered by thrombin, which cleaves fibrinopeptides A and B from alpha and beta chains, and thus exposes the N-terminal polymerization sites responsible for the formation of the soft clot.

It is found in the secreted. In terms of biological role, cleaved by the protease thrombin to yield monomers which, together with fibrinogen alpha (FGA) and fibrinogen gamma (FGG), polymerize to form an insoluble fibrin matrix. Fibrin has a major function in hemostasis as one of the primary components of blood clots. In addition, functions during the early stages of wound repair to stabilize the lesion and guide cell migration during re-epithelialization. Was originally thought to be essential for platelet aggregation, based on in vitro studies using anticoagulated blood. However subsequent studies have shown that it is not absolutely required for thrombus formation in vivo. Enhances expression of SELP in activated platelets. Maternal fibrinogen is essential for successful pregnancy. Fibrin deposition is also associated with infection, where it protects against IFNG-mediated hemorrhage. May also facilitate the antibacterial immune response via both innate and T-cell mediated pathways. The sequence is that of Fibrinogen beta chain (FGB) from Muntiacus muntjak (Barking deer).